The sequence spans 107 residues: Large ribosomal subunit protein uL24 (107 aa).

Belongs to the universal ribosomal protein uL24 family. Part of the 50S ribosomal subunit.

In terms of biological role, one of two assembly initiator proteins, it binds directly to the 5'-end of the 23S rRNA, where it nucleates assembly of the 50S subunit. One of the proteins that surrounds the polypeptide exit tunnel on the outside of the subunit. The polypeptide is Large ribosomal subunit protein uL24 (Mycobacterium ulcerans (strain Agy99)).